Reading from the N-terminus, the 118-residue chain is Down syndrome critical region protein 4 (118 aa).

The interval 1 to 39 (MSLIILTRDDEPRIFTPDSDAASPALHSTSPLPDPASAS) is disordered. Positions 28 to 39 (STSPLPDPASAS) are enriched in low complexity.

Mainly expressed in placenta.

This Homo sapiens (Human) protein is Down syndrome critical region protein 4 (DSCR4).